We begin with the raw amino-acid sequence, 222 residues long: Superoxide dismutase [Mn], mitochondrial (222 aa).

The N-terminal 24 residues, 1–24 (MLSRAACSTSRRLVPALSVLGSRQ), are a transit peptide targeting the mitochondrion. Residue histidine 50 coordinates Mn(2+). Tyrosine 58 carries the 3'-nitrotyrosine modification. N6-acetyllysine; alternate occurs at positions 68 and 75. N6-succinyllysine; alternate is present on residues lysine 68 and lysine 75. Histidine 98 is a Mn(2+) binding site. N6-acetyllysine; alternate is present on residues lysine 122 and lysine 130. N6-succinyllysine; alternate occurs at positions 122 and 130. Mn(2+) is bound by residues aspartate 183 and histidine 187. At lysine 202 the chain carries N6-acetyllysine.

It belongs to the iron/manganese superoxide dismutase family. As to quaternary structure, homotetramer. Requires Mn(2+) as cofactor. Nitrated under oxidative stress. Nitration coupled with oxidation inhibits the catalytic activity. In terms of processing, acetylation at Lys-122 decreases enzymatic activity. Deacetylated by SIRT3 upon exposure to ionizing radiations or after long fasting. Post-translationally, polyubiquitinated; leading to proteasomal degradation. Deubiquitinated by USP36 which increases protein stability.

It localises to the mitochondrion matrix. It catalyses the reaction 2 superoxide + 2 H(+) = H2O2 + O2. In terms of biological role, destroys superoxide anion radicals which are normally produced within the cells and which are toxic to biological systems. The polypeptide is Superoxide dismutase [Mn], mitochondrial (SOD2) (Bos taurus (Bovine)).